The primary structure comprises 158 residues: NAD(P)H-quinone oxidoreductase subunit N, organellar chromatophore (158 aa).

The protein belongs to the complex I NdhN subunit family. As to quaternary structure, NDH-1 can be composed of about 15 different subunits; different subcomplexes with different compositions have been identified which probably have different functions.

The protein localises to the plastid. Its subcellular location is the organellar chromatophore thylakoid membrane. The enzyme catalyses a plastoquinone + NADH + (n+1) H(+)(in) = a plastoquinol + NAD(+) + n H(+)(out). It catalyses the reaction a plastoquinone + NADPH + (n+1) H(+)(in) = a plastoquinol + NADP(+) + n H(+)(out). Functionally, NDH-1 shuttles electrons from an unknown electron donor, via FMN and iron-sulfur (Fe-S) centers, to quinones in the respiratory and/or the photosynthetic chain. The immediate electron acceptor for the enzyme in this species is believed to be plastoquinone. Couples the redox reaction to proton translocation, and thus conserves the redox energy in a proton gradient. The chain is NAD(P)H-quinone oxidoreductase subunit N, organellar chromatophore from Paulinella chromatophora.